Consider the following 193-residue polypeptide: HMG-Y-related protein A (193 aa).

Residues 11 to 81 form the H15 domain; it reads PIPPYPEMIL…LKNNYFRAGA (71 aa). A disordered region spans residues 75 to 193; the sequence is NYFRAGAPDA…PAVPSETAAA (119 aa). Residues 86–92 carry the Nuclear localization signal 1 (NLS) motif; sequence PKRGRGR. 4 DNA-binding regions (a.T hook) span residues 87-98, 113-124, 138-149, and 173-184; these read KRGRGRPPKARD, GRGRGRPPKAKS, PKPRGRPPKKAK, and KRGRGRPPKVRP. Residues 145-149 carry the Nuclear localization signal 2 (NLS) motif; that stretch reads PKKAK.

This sequence belongs to the histone H1/H5 family. In terms of processing, phosphorylated by CDK, this phosphorylation prevents DNA-binding. Motility is increased when hypophosphorylated. Acetylated.

The protein localises to the nucleus. It is found in the nucleolus. Its function is as follows. Binds A/T-rich DNA (e.g. present in the storage gamma-zein gene promoter) with a highly dynamic distribution into the nucleus. Probably involved in endosperm development, during cells shift from a mitotic cycle to endoreduplication leading to massive synthesis of storage proteins (zeins) and starch. In Zea mays (Maize), this protein is HMG-Y-related protein A.